A 403-amino-acid chain; its full sequence is uncharacterized protein (403 aa).

One can recognise a Bro-N domain in the interval Gln-3–Gly-126.

This is an uncharacterized protein from Lepidoptera (butterflies and moths).